A 204-amino-acid polypeptide reads, in one-letter code: Probable calcium-binding protein CML46 (204 aa).

EF-hand domains are found at residues 72-106, 132-167, and 170-204; these read LEFQTSIKHEEYRDDDDDGLCREDVGMVMKSLGLS, PSLEEVKQAFDVFDENRDGFIDPIDLQRVLTILGLK, and SNLENCRRMIRSFDGSKDGRIDFYGFVKFMENNFC. The Ca(2+) site is built by aspartate 145, asparagine 147, aspartate 149, and aspartate 156.

Its function is as follows. Potential calcium sensor. The protein is Probable calcium-binding protein CML46 of Arabidopsis thaliana (Mouse-ear cress).